A 292-amino-acid chain; its full sequence is HTH-type transcriptional regulator BlaA (292 aa).

Positions 5–62 (LPLNALRAFEASARHLNFTKAALELYVTQGAVSQQVRMLEERLGVILFKRLPRGLEMT) constitute an HTH lysR-type domain. The segment at residues 22 to 41 (FTKAALELYVTQGAVSQQVR) is a DNA-binding region (H-T-H motif).

It belongs to the LysR transcriptional regulatory family.

Positive regulator of the expression of the gene (blaB) for beta-lactamase. The sequence is that of HTH-type transcriptional regulator BlaA (blaA) from Proteus vulgaris.